The following is a 309-amino-acid chain: Porphobilinogen deaminase (309 aa).

Position 244 is an S-(dipyrrolylmethanemethyl)cysteine (Cys-244).

It belongs to the HMBS family. As to quaternary structure, monomer. The cofactor is dipyrromethane.

It carries out the reaction 4 porphobilinogen + H2O = hydroxymethylbilane + 4 NH4(+). It participates in porphyrin-containing compound metabolism; protoporphyrin-IX biosynthesis; coproporphyrinogen-III from 5-aminolevulinate: step 2/4. Its function is as follows. Tetrapolymerization of the monopyrrole PBG into the hydroxymethylbilane pre-uroporphyrinogen in several discrete steps. The polypeptide is Porphobilinogen deaminase (Listeria welshimeri serovar 6b (strain ATCC 35897 / DSM 20650 / CCUG 15529 / CIP 8149 / NCTC 11857 / SLCC 5334 / V8)).